A 212-amino-acid chain; its full sequence is Histone H1.2 (212 aa).

The segment covering 1 to 17 (MSEAAPAAPAAAPPAEK) has biased composition (low complexity). The disordered stretch occupies residues 1-41 (MSEAAPAAPAAAPPAEKAPAKKKAAKKPAGVRRKASGPPVS). The residue at position 2 (S2) is an N-acetylserine. Position 2 is a phosphoserine (S2). K17 bears the N6-acetyllysine mark. Residues 20–35 (AKKKAAKKPAGVRRKA) are compositionally biased toward basic residues. N6-(2-hydroxyisobutyryl)lysine occurs at positions 23, 26, and 27. K34 is modified (N6-(beta-hydroxybutyryl)lysine; alternate). K34 is subject to N6-crotonyllysine; alternate. Position 34 is an N6-methyllysine; alternate (K34). The region spanning 36 to 109 (SGPPVSELIT…GASGSFKLNK (74 aa)) is the H15 domain. Residue K46 is modified to N6-(2-hydroxyisobutyryl)lysine. The residue at position 52 (K52) is an N6-(beta-hydroxybutyryl)lysine; alternate. K52 is subject to N6-(2-hydroxyisobutyryl)lysine; alternate. The residue at position 54 (R54) is a Citrulline. At K63 the chain carries N6-(2-hydroxyisobutyryl)lysine. K64 is modified (N6-(beta-hydroxybutyryl)lysine; alternate). An N6-crotonyllysine; alternate modification is found at K64. N6-(2-hydroxyisobutyryl)lysine; alternate is present on K64. K75 and K81 each carry N6-(2-hydroxyisobutyryl)lysine. N6-(beta-hydroxybutyryl)lysine; alternate is present on residues K85 and K90. K85, K90, and K97 each carry N6-crotonyllysine; alternate. Residues K85, K90, and K97 each carry the N6-(2-hydroxyisobutyryl)lysine; alternate modification. K97 bears the N6-succinyllysine; alternate mark. Residues 98–212 (GTGASGSFKL…KAKKVAAKKK (115 aa)) are disordered. S104 carries the phosphoserine; by PKC modification. K106 is modified (N6-(beta-hydroxybutyryl)lysine). Residues K110, K117, K121, K129, and K136 each carry the N6-(2-hydroxyisobutyryl)lysine modification. Low complexity predominate over residues 121-148 (KKAGAAKAKKPAGAAKKPKKATGAATPK). Phosphothreonine is present on T146. An N6-(2-hydroxyisobutyryl)lysine modification is found at K148. Residues 149–160 (KAAKKTPKKAKK) are compositionally biased toward basic residues. N6-crotonyllysine; alternate is present on residues K159 and K168. N6-(2-hydroxyisobutyryl)lysine; alternate is present on residues K159 and K168. Residues 169-212 (KVAKSPKKAKVTKPKKVKSASKAVKPKAAKPKVAKAKKVAAKKK) are compositionally biased toward basic residues. At K186 the chain carries N6-methyllysine; by EHMT1 and EHMT2. At S187 the chain carries ADP-ribosylserine. K212 is subject to N6-(2-hydroxyisobutyryl)lysine.

The protein belongs to the histone H1/H5 family. In terms of assembly, interacts with TSC22D1 isoform 2. H1 histones are progressively phosphorylated during the cell cycle, becoming maximally phosphorylated during late G2 phase and M phase, and being dephosphorylated sharply thereafter. Post-translationally, crotonylation (Kcr) is specifically present in male germ cells and marks testis-specific genes in post-meiotic cells, including X-linked genes that escape sex chromosome inactivation in haploid cells. Crotonylation marks active promoters and enhancers and confers resistance to transcriptional repressors. It is also associated with post-meiotically activated genes on autosomes. In terms of processing, ADP-ribosylated on Ser-187 in response to DNA damage. Citrullination at Arg-54 (H1R54ci) by PADI4 takes place within the DNA-binding site of H1 and results in its displacement from chromatin and global chromatin decondensation, thereby promoting pluripotency and stem cell maintenance. Post-translationally, hydroxybutyrylation of histones is induced by starvation.

It localises to the nucleus. Its subcellular location is the chromosome. Histone H1 protein binds to linker DNA between nucleosomes forming the macromolecular structure known as the chromatin fiber. Histones H1 are necessary for the condensation of nucleosome chains into higher-order structured fibers. Also acts as a regulator of individual gene transcription through chromatin remodeling, nucleosome spacing and DNA methylation. The polypeptide is Histone H1.2 (Mus musculus (Mouse)).